The chain runs to 544 residues: Protein adenylyltransferase (544 aa).

One can recognise a Fido domain in the interval 63–216; sequence FDTAYLCHIH…LEPMQHLFED (154 aa). Residues 93-94, 106-107, 163-167, and R170 each bind ATP; these read FA, RT, and EGNGR.

It localises to the secreted. It catalyses the reaction L-tyrosyl-[protein] + ATP = O-(5'-adenylyl)-L-tyrosyl-[protein] + diphosphate. It carries out the reaction L-threonyl-[protein] + ATP = 3-O-(5'-adenylyl)-L-threonyl-[protein] + diphosphate. In terms of biological role, adenylyltransferase involved in virulence by mediating the addition of adenosine 5'-monophosphate (AMP) to specific residue of host target proteins. The polypeptide is Protein adenylyltransferase (bepA) (Bartonella henselae (strain ATCC 49882 / DSM 28221 / CCUG 30454 / Houston 1) (Rochalimaea henselae)).